A 207-amino-acid chain; its full sequence is Thiamine-phosphate synthase (207 aa).

Residues 37 to 41 (QLREK) and N69 each bind 4-amino-2-methyl-5-(diphosphooxymethyl)pyrimidine. Residues D70 and D89 each contribute to the Mg(2+) site. S108 contributes to the 4-amino-2-methyl-5-(diphosphooxymethyl)pyrimidine binding site. 134 to 136 (TGS) is a binding site for 2-[(2R,5Z)-2-carboxy-4-methylthiazol-5(2H)-ylidene]ethyl phosphate. Position 137 (K137) interacts with 4-amino-2-methyl-5-(diphosphooxymethyl)pyrimidine. Residues G165 and 185–186 (IS) each bind 2-[(2R,5Z)-2-carboxy-4-methylthiazol-5(2H)-ylidene]ethyl phosphate.

The protein belongs to the thiamine-phosphate synthase family. Mg(2+) is required as a cofactor.

It carries out the reaction 2-[(2R,5Z)-2-carboxy-4-methylthiazol-5(2H)-ylidene]ethyl phosphate + 4-amino-2-methyl-5-(diphosphooxymethyl)pyrimidine + 2 H(+) = thiamine phosphate + CO2 + diphosphate. The enzyme catalyses 2-(2-carboxy-4-methylthiazol-5-yl)ethyl phosphate + 4-amino-2-methyl-5-(diphosphooxymethyl)pyrimidine + 2 H(+) = thiamine phosphate + CO2 + diphosphate. The catalysed reaction is 4-methyl-5-(2-phosphooxyethyl)-thiazole + 4-amino-2-methyl-5-(diphosphooxymethyl)pyrimidine + H(+) = thiamine phosphate + diphosphate. It participates in cofactor biosynthesis; thiamine diphosphate biosynthesis; thiamine phosphate from 4-amino-2-methyl-5-diphosphomethylpyrimidine and 4-methyl-5-(2-phosphoethyl)-thiazole: step 1/1. In terms of biological role, condenses 4-methyl-5-(beta-hydroxyethyl)thiazole monophosphate (THZ-P) and 2-methyl-4-amino-5-hydroxymethyl pyrimidine pyrophosphate (HMP-PP) to form thiamine monophosphate (TMP). The protein is Thiamine-phosphate synthase of Desulfitobacterium hafniense (strain Y51).